We begin with the raw amino-acid sequence, 590 residues long: Peroxisomal targeting signal receptor (590 aa).

A Glycyl cysteine thioester (Cys-Gly) (interchain with G-Cter in ubiquitin) cross-link involves residue C6. Residues 7-29 (SVGSNPLAQLNKHAQGQGSSLSN) form an amphipathic helix 1 (AH1) region. A Glycyl lysine isopeptide (Lys-Gly) (interchain with G-Cter in ubiquitin) cross-link involves residue K18. The span at 18 to 30 (KHAQGQGSSLSNT) shows a compositional bias: polar residues. A disordered region spans residues 18–45 (KHAQGQGSSLSNTHVRHSGGVSGSNVFR). Residues 56–74 (RQQLNSFMSQPMRLGEDKM) form an amphipathic helix 2 (AH2) region. 3 consecutive short sequence motifs (wxxxF/Y motif) follow at residues 108–112 (WTREF), 139–143 (WKFRY), and 178–182 (WNDKF). Positions 227–243 (FQEVWDSIQQDTEEMLS) are amphipathic helix 4 (AH4). TPR repeat units lie at residues 285-319 (NPNAYQIGCILMENGAKLSEAALAFEAAIKQDPKH), 320-353 (VDAWLKLGIVQIQNEKELNGMSALETCLKLDPNN), 424-457 (PDIQLCLGLLFYANDEFDRTIDCFQAALKVNPND), 459-491 (LMWNRLGASLANSNRSEEAIQAYHRALQLKPSF), and 493-525 (RARYNLAVSSMNIGCYKEAAEHLLTALSMHDVE).

Belongs to the peroxisomal targeting signal receptor family. In terms of assembly, interacts (via WxxxF/Y and LVxEF motifs) with PEX14; promoting translocation through the PEX13-PEX14 docking complex. Monoubiquitinated at Cys-6 by PEX2 during PEX5 passage through the retrotranslocation channel: monoubiquitination acts as a signal for PEX5 extraction and is required for proper export from peroxisomes and recycling. When PEX5 recycling is compromised, polyubiquitinated at Lys-18 by PEX10 during its passage through the retrotranslocation channel, leading to its degradation.

The protein localises to the cytoplasm. The protein resides in the cytosol. It localises to the peroxisome matrix. Functionally, receptor that mediates peroxisomal import of proteins containing a C-terminal PTS1-type tripeptide peroxisomal targeting signal (SKL-type). Binds to cargo proteins containing a PTS1 peroxisomal targeting signal in the cytosol, and translocates them into the peroxisome matrix by passing through the PEX13-PEX14 docking complex along with cargo proteins. PEX5 receptor is then retrotranslocated into the cytosol, leading to release of bound cargo in the peroxisome matrix, and reset for a subsequent peroxisome import cycle. The sequence is that of Peroxisomal targeting signal receptor (PEX5) from Candida glabrata (strain ATCC 2001 / BCRC 20586 / JCM 3761 / NBRC 0622 / NRRL Y-65 / CBS 138) (Yeast).